A 148-amino-acid chain; its full sequence is Snaclec 3 (148 aa).

Positions 1–23 (WGDSSSSASACWSCSSPLSGTEA) are cleaved as a signal peptide. Cystine bridges form between cysteine 27–cysteine 38, cysteine 55–cysteine 144, and cysteine 121–cysteine 136. The region spanning 34-145 (YDQNCYKAFE…CSGTHSFVCK (112 aa)) is the C-type lectin domain.

This sequence belongs to the snaclec family. As to quaternary structure, heterodimer; disulfide-linked. As to expression, expressed by the venom gland.

It is found in the secreted. Its function is as follows. Interferes with one step of hemostasis (modulation of platelet aggregation, or coagulation cascade, for example). This chain is Snaclec 3, found in Echis carinatus sochureki (Saw-scaled viper).